The sequence spans 307 residues: N-acetylmuramic acid 6-phosphate etherase (307 aa).

The region spanning alanine 60–lysine 223 is the SIS domain. Glutamate 88 (proton donor) is an active-site residue. The active site involves glutamate 119.

This sequence belongs to the GCKR-like family. MurNAc-6-P etherase subfamily. In terms of assembly, homodimer.

The enzyme catalyses N-acetyl-D-muramate 6-phosphate + H2O = N-acetyl-D-glucosamine 6-phosphate + (R)-lactate. It functions in the pathway amino-sugar metabolism; N-acetylmuramate degradation. Functionally, specifically catalyzes the cleavage of the D-lactyl ether substituent of MurNAc 6-phosphate, producing GlcNAc 6-phosphate and D-lactate. The sequence is that of N-acetylmuramic acid 6-phosphate etherase from Synechococcus elongatus (strain ATCC 33912 / PCC 7942 / FACHB-805) (Anacystis nidulans R2).